A 135-amino-acid chain; its full sequence is MPTVNQLIKEGREKIKKKSKAPALQGNPQKRGVCVRVYTVTPKKPNSALRKVARVRLSNGIEVTCYIPGEGHNLQEHSIVLVRGGRVKDLPGVRYKIIRGALDTAGVANRRQSRSKYGAKRPKAGAAQATKGGKK.

At aspartate 89 the chain carries 3-methylthioaspartic acid. The disordered stretch occupies residues 106–135 (GVANRRQSRSKYGAKRPKAGAAQATKGGKK). The span at 111 to 123 (RQSRSKYGAKRPK) shows a compositional bias: basic residues. Low complexity predominate over residues 124–135 (AGAAQATKGGKK).

This sequence belongs to the universal ribosomal protein uS12 family. Part of the 30S ribosomal subunit. Contacts proteins S8 and S17. May interact with IF1 in the 30S initiation complex.

Functionally, with S4 and S5 plays an important role in translational accuracy. Its function is as follows. Interacts with and stabilizes bases of the 16S rRNA that are involved in tRNA selection in the A site and with the mRNA backbone. Located at the interface of the 30S and 50S subunits, it traverses the body of the 30S subunit contacting proteins on the other side and probably holding the rRNA structure together. The combined cluster of proteins S8, S12 and S17 appears to hold together the shoulder and platform of the 30S subunit. The polypeptide is Small ribosomal subunit protein uS12 (Hydrogenobaculum sp. (strain Y04AAS1)).